Here is a 395-residue protein sequence, read N- to C-terminus: Phosphopentomutase (395 aa).

Mn(2+) contacts are provided by aspartate 14, aspartate 286, histidine 291, aspartate 327, histidine 328, and histidine 339.

This sequence belongs to the phosphopentomutase family. It depends on Mn(2+) as a cofactor.

Its subcellular location is the cytoplasm. It catalyses the reaction 2-deoxy-alpha-D-ribose 1-phosphate = 2-deoxy-D-ribose 5-phosphate. It carries out the reaction alpha-D-ribose 1-phosphate = D-ribose 5-phosphate. Its pathway is carbohydrate degradation; 2-deoxy-D-ribose 1-phosphate degradation; D-glyceraldehyde 3-phosphate and acetaldehyde from 2-deoxy-alpha-D-ribose 1-phosphate: step 1/2. Its function is as follows. Isomerase that catalyzes the conversion of deoxy-ribose 1-phosphate (dRib-1-P) and ribose 1-phosphate (Rib-1-P) to deoxy-ribose 5-phosphate (dRib-5-P) and ribose 5-phosphate (Rib-5-P), respectively. This is Phosphopentomutase from Staphylococcus saprophyticus subsp. saprophyticus (strain ATCC 15305 / DSM 20229 / NCIMB 8711 / NCTC 7292 / S-41).